The following is a 424-amino-acid chain: Serine--tRNA ligase (424 aa).

230–232 (TSE) contributes to the L-serine binding site. ATP is bound by residues 261-263 (RKE) and Val-277. Residue Glu-284 coordinates L-serine. Position 348–351 (348–351 (ELTS)) interacts with ATP. An L-serine-binding site is contributed by Thr-382.

It belongs to the class-II aminoacyl-tRNA synthetase family. Type-1 seryl-tRNA synthetase subfamily. As to quaternary structure, homodimer. The tRNA molecule binds across the dimer.

It is found in the cytoplasm. It carries out the reaction tRNA(Ser) + L-serine + ATP = L-seryl-tRNA(Ser) + AMP + diphosphate + H(+). It catalyses the reaction tRNA(Sec) + L-serine + ATP = L-seryl-tRNA(Sec) + AMP + diphosphate + H(+). Its pathway is aminoacyl-tRNA biosynthesis; selenocysteinyl-tRNA(Sec) biosynthesis; L-seryl-tRNA(Sec) from L-serine and tRNA(Sec): step 1/1. Catalyzes the attachment of serine to tRNA(Ser). Is also able to aminoacylate tRNA(Sec) with serine, to form the misacylated tRNA L-seryl-tRNA(Sec), which will be further converted into selenocysteinyl-tRNA(Sec). The polypeptide is Serine--tRNA ligase (Nocardioides sp. (strain ATCC BAA-499 / JS614)).